Reading from the N-terminus, the 379-residue chain is Homoserine O-succinyltransferase (379 aa).

The 310-residue stretch at N51–L360 folds into the AB hydrolase-1 domain. S157 (nucleophile) is an active-site residue. A substrate-binding site is contributed by R227. Catalysis depends on residues D323 and H356. A substrate-binding site is contributed by D357.

This sequence belongs to the AB hydrolase superfamily. MetX family. Homodimer.

The protein localises to the cytoplasm. The catalysed reaction is L-homoserine + succinyl-CoA = O-succinyl-L-homoserine + CoA. It participates in amino-acid biosynthesis; L-methionine biosynthesis via de novo pathway; O-succinyl-L-homoserine from L-homoserine: step 1/1. In terms of biological role, transfers a succinyl group from succinyl-CoA to L-homoserine, forming succinyl-L-homoserine. The sequence is that of Homoserine O-succinyltransferase from Pseudomonas aeruginosa (strain LESB58).